Consider the following 530-residue polypeptide: Sulfate adenylyltransferase (530 aa).

An N-terminal region spans residues methionine 1–tyrosine 178. A catalytic region spans residues aspartate 179–lysine 410. Glutamine 208 provides a ligand contact to sulfate. Residues glutamine 208–asparagine 211 and glycine 304–histidine 307 each bind ATP. Active-site residues include threonine 209, arginine 210, and asparagine 211. Arginine 210 contacts sulfate. Alanine 308 serves as a coordination point for sulfate. Valine 348 serves as a coordination point for ATP. The segment at glutamine 411–serine 530 is required for oligomerization; adenylyl-sulfate kinase-like.

This sequence belongs to the sulfate adenylyltransferase family. In terms of assembly, homohexamer. Dimer of trimers.

Its subcellular location is the cytoplasm. It catalyses the reaction sulfate + ATP + H(+) = adenosine 5'-phosphosulfate + diphosphate. It functions in the pathway sulfur metabolism; hydrogen sulfide biosynthesis; sulfite from sulfate: step 1/3. Functionally, catalyzes the first intracellular reaction of sulfate assimilation, forming adenosine-5'-phosphosulfate (APS) from inorganic sulfate and ATP. Plays an important role in sulfate activation as a component of the biosynthesis pathway of sulfur-containing amino acids. The chain is Sulfate adenylyltransferase from Debaryomyces hansenii (strain ATCC 36239 / CBS 767 / BCRC 21394 / JCM 1990 / NBRC 0083 / IGC 2968) (Yeast).